The primary structure comprises 73 residues: Translation initiation factor IF-1 (73 aa).

The 73-residue stretch at 1–73 (MAKKEDTIVL…TKARVVYRHR (73 aa)) folds into the S1-like domain.

Belongs to the IF-1 family. As to quaternary structure, component of the 30S ribosomal translation pre-initiation complex which assembles on the 30S ribosome in the order IF-2 and IF-3, IF-1 and N-formylmethionyl-tRNA(fMet); mRNA recruitment can occur at any time during PIC assembly.

It localises to the cytoplasm. In terms of biological role, one of the essential components for the initiation of protein synthesis. Stabilizes the binding of IF-2 and IF-3 on the 30S subunit to which N-formylmethionyl-tRNA(fMet) subsequently binds. Helps modulate mRNA selection, yielding the 30S pre-initiation complex (PIC). Upon addition of the 50S ribosomal subunit IF-1, IF-2 and IF-3 are released leaving the mature 70S translation initiation complex. The polypeptide is Translation initiation factor IF-1 (Chlamydia muridarum (strain MoPn / Nigg)).